The primary structure comprises 327 residues: Gamma-resorcylate decarboxylase (327 aa).

Zn(2+) is bound by residues Glu-8 and His-10. 2,6-dihydroxybenzoate-binding residues include Phe-23, His-164, and Asp-287. Zn(2+) is bound by residues His-164 and Asp-287. Asp-287 is a catalytic residue.

The protein belongs to the metallo-dependent hydrolases superfamily. ACMSD family. In terms of assembly, homotetramer. Dimer of dimers. Zn(2+) is required as a cofactor.

The catalysed reaction is 2,6-dihydroxybenzoate + H(+) = resorcinol + CO2. It catalyses the reaction 2,3-dihydroxybenzoate + H(+) = catechol + CO2. It participates in aromatic compound metabolism. With respect to regulation, inhibited by CuCl(2), monoiodoacetate and diethylpyrocarbonate. Inhibited by 2,3-dihydroxybenzaldehyde, which is an analog of the substrate 2,3-dihydroxybenzoate. Functionally, involved in the gamma-resorcylate (2,6-dihydroxybenzoate) catabolism. Catalyzes the reversible decarboxylation of gamma-resorcylate to resorcinol. The reaction is reversible, but equilibrium greatly favors the decarboxylation reaction. Also catalyzes the decarboxylation of 2,3-dihydroxybenzoate to catechol, but does not act on 2,4-dihydroxybenzoate, 2,5-dihydroxybenzoate, 3,4-dihydroxybenzoate, 3,5-dihydroxybenzoate, 2-hydroxybenzoate, or 3-hydroxybenzoate. Only resorcinol is carboxylated by the reverse reaction. The polypeptide is Gamma-resorcylate decarboxylase (Rhizobium sp. (strain MTP-10005)).